Here is a 430-residue protein sequence, read N- to C-terminus: Synaptotagmin-11 (430 aa).

The Vesicular portion of the chain corresponds to 1–15 (MAEITNIRPSFDVSP). The helical transmembrane segment at 16-36 (VAAGLIGASVLVVCVSVTVFV) threads the bilayer. Over 37-430 (WTCCHQQAEK…IAKWHSLSEY (394 aa)) the chain is Cytoplasmic. The segment covering 79 to 90 (RRDKDGPRRESG) has biased composition (basic and acidic residues). 2 disordered regions span residues 79–120 (RRDK…CMDQ) and 132–152 (RSPMTSLTPGESKATSPSSPE). Serine 133 bears the Phosphoserine mark. Polar residues predominate over residues 134-150 (PMTSLTPGESKATSPSS). C2 domains follow at residues 156–278 (MLGS…QLTR) and 290–425 (SRGE…AKWH). Aspartate 249, serine 252, and aspartate 255 together coordinate Ca(2+).

The protein belongs to the synaptotagmin family. Homodimer. Can also form heterodimers. Interacts with PRKN. Interacts (via C2 2 domain) with AGO2 and SND1; the interaction with SND1 is direct. Interacts with KIF1A; the interaction increases in presence of calcium. Ca(2+) is required as a cofactor. In terms of processing, ubiquitinated, at least by PRKN, and targeted to the proteasome complex for degradation. Ubiquitination is inhibited by ATP13A2. As to expression, expressed in cerebellun, cerebellar cortex, hippocampus, olfactory bulb and spinal cord (at protein level). Expressed by neurons, astrocytes and microglia (at protein level). Expressed in macrophages (at protein level).

It localises to the cytoplasmic vesicle membrane. The protein resides in the perikaryon. The protein localises to the golgi apparatus. It is found in the trans-Golgi network membrane. Its subcellular location is the recycling endosome membrane. It localises to the lysosome membrane. The protein resides in the cytoplasmic vesicle. The protein localises to the phagosome. It is found in the cell projection. Its subcellular location is the axon. It localises to the dendrite. The protein resides in the postsynaptic density. The protein localises to the clathrin-coated vesicle membrane. Synaptotagmin family member involved in vesicular and membrane trafficking which does not bind Ca(2+). Inhibits clathrin-mediated and bulk endocytosis, functions to ensure precision in vesicle retrieval. Plays an important role in dopamine transmission by regulating endocytosis and the vesicle-recycling process. Essential component of a neuronal vesicular trafficking pathway that differs from the synaptic vesicle trafficking pathway but is crucial for development and synaptic plasticity. In macrophages and microglia, inhibits the conventional cytokine secretion, of at least IL6 and TNF, and phagocytosis. In astrocytes, regulates lysosome exocytosis, mechanism required for the repair of injured astrocyte cell membrane. Required for the ATP13A2-mediated regulation of the autophagy-lysosome pathway. This is Synaptotagmin-11 from Mus musculus (Mouse).